The primary structure comprises 183 residues: Threonylcarbamoyl-AMP synthase (183 aa).

Residues 1–183 (MNREQIANAL…LRTNQLFRQG (183 aa)) enclose the YrdC-like domain.

It belongs to the SUA5 family. TsaC subfamily.

The protein localises to the cytoplasm. The enzyme catalyses L-threonine + hydrogencarbonate + ATP = L-threonylcarbamoyladenylate + diphosphate + H2O. Functionally, required for the formation of a threonylcarbamoyl group on adenosine at position 37 (t(6)A37) in tRNAs that read codons beginning with adenine. Catalyzes the conversion of L-threonine, HCO(3)(-)/CO(2) and ATP to give threonylcarbamoyl-AMP (TC-AMP) as the acyladenylate intermediate, with the release of diphosphate. The protein is Threonylcarbamoyl-AMP synthase of Haemophilus influenzae (strain PittEE).